The following is a 1872-amino-acid chain: Fatty acid synthase beta subunit pkiC (1872 aa).

The interval 174 to 425 (VFGGQGECSR…DQSRIPFRDR (252 aa)) is acetyltransferase (AT) domain. Positions 591–836 (NRVLGAPPIM…IIAATPGVSD (246 aa)) are enoyl reductase (ER) domain. The interval 1111 to 1132 (TTPASWSTLSLTERDTSEETSD) is disordered. The interval 1158–1597 (PSHPLWMRAL…MPLEKLVVEI (440 aa)) is dehydratase (DH) domain. The 100-residue stretch at 1518-1617 (PPSNEPYAQL…CFSILAKRKE (100 aa)) folds into the MaoC-like domain.

This sequence belongs to the fungal fatty acid synthetase subunit beta family. As to quaternary structure, [Alpha(6)beta(6)] hexamers of two multifunctional subunits (alpha and beta).

The catalysed reaction is acetyl-CoA + n malonyl-CoA + 2n NADPH + 4n H(+) = a long-chain-acyl-CoA + n CoA + n CO2 + 2n NADP(+).. The enzyme catalyses holo-[ACP] + acetyl-CoA = acetyl-[ACP] + CoA. It carries out the reaction holo-[ACP] + malonyl-CoA = malonyl-[ACP] + CoA. It catalyses the reaction a (3R)-hydroxyacyl-[ACP] = a (2E)-enoyl-[ACP] + H2O. The catalysed reaction is a 2,3-saturated acyl-[ACP] + NAD(+) = a (2E)-enoyl-[ACP] + NADH + H(+). The enzyme catalyses (9Z)-octadecenoyl-[ACP] + H2O = (9Z)-octadecenoate + holo-[ACP] + H(+). It participates in secondary metabolite biosynthesis. Functionally, fatty acid synthase beta subunit; part of the pki gene cluster that mediates the biosynthesis of 2,4-dihydroxy-3-methyl-6-(2-oxoundecyl)benzaldehyde. The first step in the pathway is the generation of the decanoyl starter unit by the FAS composed of subunits pkiB and pkiC, which is then transferred directly from the FAS to the SAT domain of the non-reducing polyketide synthase pkiA. PkiA condenses the decanoyyl starter unit with 4 malonyl-CoA units and performs one methylation step to yield 2,4-dihydroxy-3-methyl-6-(2-oxoundecyl)benzaldehyde. The sequence is that of Fatty acid synthase beta subunit pkiC from Emericella nidulans (strain FGSC A4 / ATCC 38163 / CBS 112.46 / NRRL 194 / M139) (Aspergillus nidulans).